A 951-amino-acid polypeptide reads, in one-letter code: Leucine-rich repeat-containing G-protein coupled receptor 4 (951 aa).

The N-terminal stretch at 1 to 24 (MPGPLRLLCFFALGLLGSAGPSGA) is a signal peptide. The region spanning 25 to 57 (APPLCAAPCSCDGDRRVDCSGKGLTAVPEGLSA) is the LRRNT domain. Residues 25–544 (APPLCAAPCS…LLGSWMIRLT (520 aa)) lie on the Extracellular side of the membrane. Intrachain disulfides connect Cys-29-Cys-35 and Cys-33-Cys-43. 10 LRR repeats span residues 58 to 79 (FTQALDISMNNITQLPEDAFKS), 82 to 103 (FLEELQLAGNDLSFIHPKALSG), 106 to 127 (ELKVLTLQNNQLRTVPSEAIHG), 130 to 151 (ALQSLRLDANHITSVPEDSFEG), 154 to 177 (QLRHLWLDDNSLTEVPVRPLSNLP), 178 to 199 (TLQALTLALNNISSIPDFAFTN), 202 to 223 (SLVVLHLHNNKIKSLSQHCFDG), 226 to 247 (NLETLDLNYNNLDEFPQAIKAL), 249 to 270 (SLKELGFHSNSISVIPDGAFGG), and 273 to 294 (LLRTIHLYDNPLSFVGNSAFHN). Asn-68 carries an N-linked (GlcNAc...) asparagine glycan. Residues Asn-188 and Asn-199 are each glycosylated (N-linked (GlcNAc...) asparagine). N-linked (GlcNAc...) asparagine glycosylation is found at Asn-294 and Asn-314. 5 LRR repeats span residues 320-341 (HLESLTLTGTKISSIPDDLCQN), 344-365 (MLRTLDLSYNNIRDLPSFNGCR), 366-387 (ALEEISLQRNQISLIKENTFQG), 390-411 (SLRILDLSRNLIREIHSGAFAK), and 414-435 (TITNLDVSFNELTSFPTEGLNG). Cys-339 and Cys-364 form a disulfide bridge. Cystine bridges form between Cys-470–Cys-522 and Cys-471–Cys-476. N-linked (GlcNAc...) asparagine glycosylation is present at Asn-505. Residues 545–565 (VWFIFLVALLFNLLVILTVFA) traverse the membrane as a helical segment. The Cytoplasmic portion of the chain corresponds to 566–575 (SCSSLPASKL). The helical transmembrane segment at 576–596 (FIGLISVSNLLMGIYTGILTF) threads the bilayer. The Extracellular segment spans residues 597-619 (LDAVSWGRFAEFGIWWETGSGCK). Residues Cys-618 and Cys-693 are joined by a disulfide bond. The chain crosses the membrane as a helical span at residues 620–640 (VAGSLAVFSSESAVFLLTLAA). The Cytoplasmic portion of the chain corresponds to 641–661 (VERSVFAKDLMKHGKSSHLRQ). The helical transmembrane segment at 662 to 682 (FQVAALLALLGAAVAGCFPLF) threads the bilayer. Residues 683–703 (HGGQYSASPLCLPFPTGETPS) lie on the Extracellular side of the membrane. Residues 704-724 (LGFTVTLVLLNSLAFLLMAII) traverse the membrane as a helical segment. Topologically, residues 725-756 (YTKLYCNLEKEDLSENSQSSVIKHVAWLIFTN) are cytoplasmic. Residues 757–777 (CIFFCPVAFFSFAPLITAISI) form a helical membrane-spanning segment. The Extracellular segment spans residues 778 to 783 (SPEIMK). The helical transmembrane segment at 784 to 804 (SVTLIFFPLPACLNPVLYVFF) threads the bilayer. The Cytoplasmic segment spans residues 805–951 (NPKFKEDWKL…YAYNLQRVRD (147 aa)). Residue Ser-920 is modified to Phosphoserine.

It belongs to the G-protein coupled receptor 1 family.

The protein localises to the cell membrane. In terms of biological role, receptor for R-spondins that potentiates the canonical Wnt signaling pathway and is involved in the formation of various organs. Upon binding to R-spondins (RSPO1, RSPO2, RSPO3 or RSPO4), associates with phosphorylated LRP6 and frizzled receptors that are activated by extracellular Wnt receptors, triggering the canonical Wnt signaling pathway to increase expression of target genes. In contrast to classical G-protein coupled receptors, does not activate heterotrimeric G-proteins to transduce the signal. Its function as activator of the Wnt signaling pathway is required for the development of various organs, including liver, kidney, intestine, bone, reproductive tract and eye. May also act as a receptor for norrin (NDP), such results however require additional confirmation in vivo. Required during spermatogenesis to activate the Wnt signaling pathway in peritubular myoid cells. Required for the maintenance of intestinal stem cells and Paneth cell differentiation in postnatal intestinal crypts. Acts as a regulator of bone formation and remodeling. Involved in kidney development; required for maintaining the ureteric bud in an undifferentiated state. Involved in the development of the anterior segment of the eye. Required during erythropoiesis. Also acts as a negative regulator of innate immunity by inhibiting TLR2/TLR4 associated pattern-recognition and pro-inflammatory cytokine production. Plays an important role in regulating the circadian rhythms of plasma lipids, partially through regulating the rhythmic expression of MTTP. Required for proper development of GnRH neurons (gonadotropin-releasing hormone expressing neurons) that control the release of reproductive hormones from the pituitary gland. The chain is Leucine-rich repeat-containing G-protein coupled receptor 4 (Lgr4) from Rattus norvegicus (Rat).